A 583-amino-acid polypeptide reads, in one-letter code: Secretogranin-2b (583 aa).

Positions 1-28 (MMLSLPKLSAGGVVVLLATLLHTLTVQG) are cleaved as a signal peptide. Disordered stretches follow at residues 123-159 (AGES…AGFV) and 526-583 (VDNG…VAGM). Over residues 534 to 546 (AKRDTQGKEEPEG) the composition is skewed to basic and acidic residues.

Belongs to the chromogranin/secretogranin protein family.

It is found in the secreted. In terms of biological role, neuroendocrine protein of the granin family that regulates the biogenesis of secretory granules. Required for neurovascular modeling of the hindbrain. Acts in a non-cell autonomous manner and is required for migration and proliferation of central artery endothelial cells. Required for normal courting behavior and spawning. The polypeptide is Secretogranin-2b (Danio rerio (Zebrafish)).